We begin with the raw amino-acid sequence, 293 residues long: UDP-3-O-acyl-N-acetylglucosamine deacetylase (293 aa).

Zn(2+) is bound by residues H79, H236, and D240. H263 (proton donor) is an active-site residue.

It belongs to the LpxC family. Requires Zn(2+) as cofactor.

The catalysed reaction is a UDP-3-O-[(3R)-3-hydroxyacyl]-N-acetyl-alpha-D-glucosamine + H2O = a UDP-3-O-[(3R)-3-hydroxyacyl]-alpha-D-glucosamine + acetate. Its pathway is glycolipid biosynthesis; lipid IV(A) biosynthesis; lipid IV(A) from (3R)-3-hydroxytetradecanoyl-[acyl-carrier-protein] and UDP-N-acetyl-alpha-D-glucosamine: step 2/6. Catalyzes the hydrolysis of UDP-3-O-myristoyl-N-acetylglucosamine to form UDP-3-O-myristoylglucosamine and acetate, the committed step in lipid A biosynthesis. The polypeptide is UDP-3-O-acyl-N-acetylglucosamine deacetylase (Phenylobacterium zucineum (strain HLK1)).